The sequence spans 317 residues: Cyclin-T1-3 (317 aa).

This sequence belongs to the cyclin family. Cyclin T subfamily. As to quaternary structure, interacts with CDKC-1 and CDKC-2. In terms of tissue distribution, abundantly expressed in flowers. Expressed in roots, seedlings, rosettes and stems.

The sequence is that of Cyclin-T1-3 (CYCT1-3) from Arabidopsis thaliana (Mouse-ear cress).